The following is a 227-amino-acid chain: Cysteine-rich hydrophobic domain-containing protein 1 (227 aa).

The tract at residues 1-84 is disordered; that stretch reads MSILLPNMAE…PPRVVSEEHL (84 aa). The span at 13 to 23 shows a compositional bias: acidic residues; the sequence is TISELEEEEEA. The span at 24 to 44 shows a compositional bias: low complexity; that stretch reads ATSSSSPSSSPSSSSSSSVSG. The segment covering 45–72 has biased composition (acidic residues); the sequence is PDEDEEDEEEEEEEDEEEEDEEEEEEEV. Residues 46–73 adopt a coiled-coil conformation; it reads DEDEEDEEEEEEEDEEEEDEEEEEEEVP.

This sequence belongs to the CHIC family. In terms of processing, palmitoylated. In terms of tissue distribution, expressed moderately in the brain.

The protein localises to the cell membrane. It localises to the cytoplasmic vesicle. This chain is Cysteine-rich hydrophobic domain-containing protein 1 (Chic1), found in Mus musculus (Mouse).